The primary structure comprises 481 residues: Ribosomal RNA small subunit methyltransferase F (481 aa).

S-adenosyl-L-methionine is bound by residues 125–131 (AAAPGSK), glutamate 149, aspartate 176, and aspartate 194. The active-site Nucleophile is the cysteine 247.

It belongs to the class I-like SAM-binding methyltransferase superfamily. RsmB/NOP family.

Its subcellular location is the cytoplasm. The enzyme catalyses cytidine(1407) in 16S rRNA + S-adenosyl-L-methionine = 5-methylcytidine(1407) in 16S rRNA + S-adenosyl-L-homocysteine + H(+). Its function is as follows. Specifically methylates the cytosine at position 1407 (m5C1407) of 16S rRNA. This is Ribosomal RNA small subunit methyltransferase F from Psychromonas ingrahamii (strain DSM 17664 / CCUG 51855 / 37).